A 55-amino-acid chain; its full sequence is Ribulose bisphosphate carboxylase large chain (55 aa).

His-18 (proton acceptor) is an active-site residue. Substrate-binding residues include Arg-19 and His-27.

Belongs to the RuBisCO large chain family. Type I subfamily. Heterohexadecamer of 8 large chains and 8 small chains; disulfide-linked. The disulfide link is formed within the large subunit homodimers. The cofactor is Mg(2+). In terms of processing, the disulfide bond which can form in the large chain dimeric partners within the hexadecamer appears to be associated with oxidative stress and protein turnover.

It is found in the plastid. Its subcellular location is the chloroplast. It carries out the reaction 2 (2R)-3-phosphoglycerate + 2 H(+) = D-ribulose 1,5-bisphosphate + CO2 + H2O. It catalyses the reaction D-ribulose 1,5-bisphosphate + O2 = 2-phosphoglycolate + (2R)-3-phosphoglycerate + 2 H(+). Functionally, ruBisCO catalyzes two reactions: the carboxylation of D-ribulose 1,5-bisphosphate, the primary event in carbon dioxide fixation, as well as the oxidative fragmentation of the pentose substrate in the photorespiration process. Both reactions occur simultaneously and in competition at the same active site. The sequence is that of Ribulose bisphosphate carboxylase large chain from Vitis sp. (Grape).